Consider the following 221-residue polypeptide: Factor arrest protein 7 (221 aa).

Component of a complex at least composed of FAR3, FAR7, FAR8, FAR10, FAR11 and VPS64.

Functionally, participates in the control of the reentry into the cell cycle following pheromone treatment. The sequence is that of Factor arrest protein 7 (FAR7) from Saccharomyces cerevisiae (strain ATCC 204508 / S288c) (Baker's yeast).